The chain runs to 557 residues: Nicotinate phosphoribosyltransferase 2 (557 aa).

Nicotinate is bound by residues Tyr-31 and Thr-219. His-222 carries the post-translational modification Phosphohistidine. Nicotinate is bound at residue Arg-329. A 5-phospho-alpha-D-ribose 1-diphosphate-binding site is contributed by Thr-391.

Belongs to the NAPRTase family. The cofactor is Mg(2+). Mn(2+) serves as cofactor. Transiently phosphorylated on a His residue during the reaction cycle. Phosphorylation strongly increases the affinity for substrates and increases the rate of nicotinate D-ribonucleotide production. Dephosphorylation regenerates the low-affinity form of the enzyme, leading to product release.

It carries out the reaction nicotinate + 5-phospho-alpha-D-ribose 1-diphosphate + ATP + H2O = nicotinate beta-D-ribonucleotide + ADP + phosphate + diphosphate. It participates in cofactor biosynthesis; NAD(+) biosynthesis; nicotinate D-ribonucleotide from nicotinate: step 1/1. Catalyzes the first step in the biosynthesis of NAD from nicotinic acid, the ATP-dependent synthesis of beta-nicotinate D-ribonucleotide from nicotinate and 5-phospho-D-ribose 1-phosphate. Helps prevent cellular oxidative stress via its role in NAD biosynthesis. The sequence is that of Nicotinate phosphoribosyltransferase 2 from Arabidopsis thaliana (Mouse-ear cress).